Reading from the N-terminus, the 226-residue chain is Cytidylate kinase (226 aa).

10–18 is a binding site for ATP; that stretch reads GPASSGKST.

This sequence belongs to the cytidylate kinase family. Type 1 subfamily.

It is found in the cytoplasm. It carries out the reaction CMP + ATP = CDP + ADP. It catalyses the reaction dCMP + ATP = dCDP + ADP. The protein is Cytidylate kinase of Streptococcus equi subsp. equi (strain 4047).